Reading from the N-terminus, the 376-residue chain is UDP-N-acetylglucosamine--N-acetylmuramyl-(pentapeptide) pyrophosphoryl-undecaprenol N-acetylglucosamine transferase (376 aa).

UDP-N-acetyl-alpha-D-glucosamine-binding positions include 12-14, N126, R163, S198, and Q296; that span reads TAG.

The protein belongs to the glycosyltransferase 28 family. MurG subfamily.

Its subcellular location is the cell membrane. The enzyme catalyses di-trans,octa-cis-undecaprenyl diphospho-N-acetyl-alpha-D-muramoyl-L-alanyl-D-glutamyl-meso-2,6-diaminopimeloyl-D-alanyl-D-alanine + UDP-N-acetyl-alpha-D-glucosamine = di-trans,octa-cis-undecaprenyl diphospho-[N-acetyl-alpha-D-glucosaminyl-(1-&gt;4)]-N-acetyl-alpha-D-muramoyl-L-alanyl-D-glutamyl-meso-2,6-diaminopimeloyl-D-alanyl-D-alanine + UDP + H(+). Its pathway is cell wall biogenesis; peptidoglycan biosynthesis. Its function is as follows. Cell wall formation. Catalyzes the transfer of a GlcNAc subunit on undecaprenyl-pyrophosphoryl-MurNAc-pentapeptide (lipid intermediate I) to form undecaprenyl-pyrophosphoryl-MurNAc-(pentapeptide)GlcNAc (lipid intermediate II). This Frankia casuarinae (strain DSM 45818 / CECT 9043 / HFP020203 / CcI3) protein is UDP-N-acetylglucosamine--N-acetylmuramyl-(pentapeptide) pyrophosphoryl-undecaprenol N-acetylglucosamine transferase.